The following is a 217-amino-acid chain: ATP synthase subunit a (217 aa).

Transmembrane regions (helical) follow at residues 5–25 (EHVI…LAAG), 63–83 (LIAS…LPFV), 89–109 (NINT…FEGF), 120–140 (FMGP…MSHL), 157–177 (GAIL…TLAV), and 191–213 (LAIV…GAVV).

It belongs to the ATPase A chain family. F-type ATPases have 2 components, CF(1) - the catalytic core - and CF(0) - the membrane proton channel. CF(1) has five subunits: alpha(3), beta(3), gamma(1), delta(1), epsilon(1). CF(0) has three main subunits: a(1), b(2) and c(9-12). The alpha and beta chains form an alternating ring which encloses part of the gamma chain. CF(1) is attached to CF(0) by a central stalk formed by the gamma and epsilon chains, while a peripheral stalk is formed by the delta and b chains.

The protein localises to the cell inner membrane. Its function is as follows. Key component of the proton channel; it plays a direct role in the translocation of protons across the membrane. The sequence is that of ATP synthase subunit a from Hydrogenobaculum sp. (strain Y04AAS1).